A 690-amino-acid chain; its full sequence is Xylosyl- and glucuronyltransferase LARGE2 (690 aa).

The Cytoplasmic segment spans residues 1 to 7 (MLPRGRP). A helical; Signal-anchor for type II membrane protein transmembrane segment spans residues 8 to 28 (RALGAALLLLLLLVVGFFLFG). Topologically, residues 29-690 (RDPEYGLGTT…TALQQSRSRA (662 aa)) are lumenal. 2 N-linked (GlcNAc...) asparagine glycosylation sites follow: asparagine 50 and asparagine 77. A xylosyltransferase activity region spans residues 67 to 342 (LHVAIVCAGY…FLGFDGKLLC (276 aa)). Mn(2+)-binding residues include aspartate 171 and aspartate 173. The N-linked (GlcNAc...) asparagine glycan is linked to asparagine 201. Residues 343 to 686 (RELFGCPNQF…LKYLTALQQS (344 aa)) form a glucuronyltransferase activity region. Residues aspartate 491 and aspartate 493 each coordinate Mn(2+).

It in the C-terminal section; belongs to the glycosyltransferase 49 family. In the N-terminal section; belongs to the glycosyltransferase 8 family. Interacts with B4GAT1. It depends on Mn(2+) as a cofactor.

It is found in the golgi apparatus membrane. It carries out the reaction 3-O-[beta-D-GlcA-(1-&gt;3)-beta-D-Xyl-(1-&gt;4)-Rib-ol-P-Rib-ol-P-3-beta-D-GalNAc-(1-&gt;3)-beta-D-GlcNAc-(1-&gt;4)-(O-6-P-alpha-D-Man)]-Thr-[protein] + UDP-alpha-D-xylose = 3-O-[alpha-D-Xyl-(1-&gt;3)-beta-D-GlcA-(1-&gt;4)-beta-D-Xyl-(1-&gt;4)-Rib-ol-P-Rib-ol-P-3-beta-D-GalNAc-(1-&gt;3)-beta-D-GlcNAc-(1-&gt;4)-(O-6-P-alpha-D-Man)]-Thr-[protein] + UDP + H(+). The enzyme catalyses 3-O-{(1-&gt;[3)-alpha-D-Xyl-(1-&gt;3)-beta-D-GlcA-(1-&gt;](n)-4)-beta-D-Xyl-(1-&gt;4)-Rib-ol-P-Rib-ol-P-3-beta-D-GalNAc-(1-&gt;3)-beta-D-GlcNAc-(1-&gt;4)-O-6-P-alpha-D-Man}-L-Thr-[protein] + UDP-alpha-D-glucuronate = 3-O-{beta-D-GlcA-(1-&gt;[3)-alpha-D-Xyl-(1-&gt;3)-beta-D-GlcA-(1-&gt;](n)-4)-beta-D-Xyl-(1-&gt;4)-Rib-ol-P-Rib-ol-P-3-beta-D-GalNAc-(1-&gt;3)-beta-D-GlcNAc-(1-&gt;4)-O-6-P-alpha-D-Man}-L-Thr-[protein] + UDP + H(+). It catalyses the reaction 3-O-{beta-D-GlcA-(1-&gt;[3)-alpha-D-Xyl-(1-&gt;3)-beta-D-GlcA-(1-&gt;](n)-4)-beta-D-Xyl-(1-&gt;4)-Rib-ol-P-Rib-ol-P-3-beta-D-GalNAc-(1-&gt;3)-beta-D-GlcNAc-(1-&gt;4)-O-6-P-alpha-D-Man}-L-Thr-[protein] + UDP-alpha-D-xylose = 3-O-{(1-&gt;[3)-alpha-D-Xyl-(1-&gt;3)-beta-D-GlcA-(1-&gt;](n+1)-4)-beta-D-Xyl-(1-&gt;4)-Rib-ol-P-Rib-ol-P-3-beta-D-GalNAc-(1-&gt;3)-beta-D-GlcNAc-(1-&gt;4)-O-6-P-alpha-D-Man}-L-Thr-[protein] + UDP + H(+). It functions in the pathway protein modification; protein glycosylation. Functionally, bifunctional glycosyltransferase with both alpha-1,3-xylosyltransferase and beta-1,3-glucuronyltransferase activities involved in the maturation of alpha-dystroglycan (DAG1) by glycosylation leading to DAG1 binding to laminin G-like domain-containing extracellular proteins with high affinity and in a phosphorylated-O-mannosyl trisaccharide dependent manner. Elongates the glucuronyl-beta-1,4-xylose-beta disaccharide primer structure by adding repeating units [-3-Xylose-alpha-1,3-GlcA-beta-1-] to produce a heteropolysaccharide. Supports the maturation of DAG1 more effectively than LARGE1. In addition, can modify both heparan sulfate (HS)- and chondroitin/dermatan sulfate (CS/DS)-proteoglycans (PGs), namely GPC4, with a glycosaminoglycan (GAG)-like polysaccharide composed of xylose and glucuronic acid to confer laminin binding. The polypeptide is Xylosyl- and glucuronyltransferase LARGE2 (Rattus norvegicus (Rat)).